The following is a 68-amino-acid chain: U1-hexatoxin-Hv1a (68 aa).

5 cysteine pairs are disulfide-bonded: C3–C14, C8–C22, C13–C48, C32–C56, and C50–C63.

Belongs to the MIT-like AcTx family. As to expression, expressed by the venom gland.

The protein localises to the secreted. The protein is U1-hexatoxin-Hv1a of Hadronyche versuta (Blue mountains funnel-web spider).